The sequence spans 452 residues: MTYVFPETIAAQATPSGRGGIGVVRVSGEKTKAIAQKILGCVPKPRYATFVKFRDSGSVIDEGIALYFPKPNSFTGEDVLELHGHGGPVVMDRLLNTVLKAGARQARPGEFSERAFLNNKIDLAQAEAVADLINASSEQAARSAMRSLQGEFSKRIHQLVDALIQLRMYIEASIDFPEEEIDFLADERIKETLENLTHQVQEIEKTAKQGALLREGITVVIAGEPNVGKSSLLNLLSGQETAIVTDIAGTTRDIIRESIHIDGLPIHVVDTAGLRLTEDVVEKEGVRRTQKAVQQADLLLLMIDASKPTEDFKKIIAQWFSENDNKIPTLIVENKIDLIGEAPRKENKEYPHIKLSVKTRAGVELLKNHLKNTAGFEATHENNFIARRRHCDAIARASAFLKNANNHLLNQKAGELVAEDLKLAQNALSEITGEFTSDDLLGKIFSEFCIGK.

Residues Arg25, Glu81, and Lys120 each coordinate (6S)-5-formyl-5,6,7,8-tetrahydrofolate. The 160-residue stretch at 216 to 375 folds into the TrmE-type G domain; the sequence is GITVVIAGEP…LKNHLKNTAG (160 aa). K(+) is bound at residue Asn226. GTP contacts are provided by residues 226 to 231, 245 to 251, and 270 to 273; these read NVGKSS, TDIAGTT, and DTAG. Ser230 serves as a coordination point for Mg(2+). The K(+) site is built by Thr245, Ile247, and Thr250. Thr251 serves as a coordination point for Mg(2+). A (6S)-5-formyl-5,6,7,8-tetrahydrofolate-binding site is contributed by Lys452.

Belongs to the TRAFAC class TrmE-Era-EngA-EngB-Septin-like GTPase superfamily. TrmE GTPase family. In terms of assembly, homodimer. Heterotetramer of two MnmE and two MnmG subunits. K(+) is required as a cofactor.

The protein localises to the cytoplasm. Functionally, exhibits a very high intrinsic GTPase hydrolysis rate. Involved in the addition of a carboxymethylaminomethyl (cmnm) group at the wobble position (U34) of certain tRNAs, forming tRNA-cmnm(5)s(2)U34. The protein is tRNA modification GTPase MnmE of Coxiella burnetii (strain Dugway 5J108-111).